Here is a 63-residue protein sequence, read N- to C-terminus: Putative alpha-neurotoxin RjAa9 (63 aa).

Positions 1-60 constitute an LCN-type CS-alpha/beta domain; sequence KEGYPVDWGNCKYECMSDEYCKDLCADRKATSGYCYKLNWSCYCKGLPDDSPIKTPGKCR. Intrachain disulfides connect Cys11-Cys59, Cys15-Cys35, Cys21-Cys42, and Cys25-Cys44.

This sequence belongs to the long (4 C-C) scorpion toxin superfamily. Sodium channel inhibitor family. Alpha subfamily. As to expression, expressed by the venom gland.

The protein resides in the secreted. In terms of biological role, alpha toxins bind voltage-independently at site-3 of sodium channels (Nav) and inhibits the inactivation of the activated channels, thereby blocking neuronal transmission. The polypeptide is Putative alpha-neurotoxin RjAa9 (Rhopalurus junceus (Caribbean blue scorpion)).